The following is a 291-amino-acid chain: Small ribosomal subunit protein uS2 (291 aa).

The tract at residues 254-291 is disordered; that stretch reads RTSNRDNKNNKNNNNTDNTDNAASIKEEDLIGGSNNEN. Residues 263 to 277 are compositionally biased toward low complexity; it reads NKNNNNTDNTDNAAS.

Belongs to the universal ribosomal protein uS2 family.

The chain is Small ribosomal subunit protein uS2 from Ehrlichia canis (strain Jake).